We begin with the raw amino-acid sequence, 226 residues long: Ras-related protein RABA4a (226 aa).

Thr2 carries the N-acetylthreonine modification. 24–31 contributes to the GTP binding site; that stretch reads GDSAVGKS. The short motif at 46–54 is the Effector region element; the sequence is SKATIGVEF. GTP-binding positions include 72–76, 130–133, and 160–161; these read DTAGQ, NKSD, and SA. Residues 189–226 are disordered; the sequence is ASEDQENGNPGSLAGKKIDIVPGPGQVIPNKSNMCCNS. The segment covering 217–226 has biased composition (polar residues); the sequence is PNKSNMCCNS. S-geranylgeranyl cysteine attachment occurs at residues Cys223 and Cys224.

Belongs to the small GTPase superfamily. Rab family. As to quaternary structure, interacts with TCTP1.

The protein resides in the cell membrane. In terms of biological role, intracellular vesicle trafficking and protein transport. In Arabidopsis thaliana (Mouse-ear cress), this protein is Ras-related protein RABA4a.